Consider the following 157-residue polypeptide: MGVFNFEDETTSIVAPARLYKALVTDSDNLIPKVIDAIQSIEIVEGNGGAGTIKKLTFVEGGETKYDLHKVDLVDDVNFAYNYSIVGGGGLPDTVEKISFESKLSAGPDGGSIAKLTVKYFTKGDAAPSEEEIKGGKARGDGLFKALEGYVLANPDY.

It belongs to the BetVI family. Expressed in roots. Detected in nodules and leaves, but not in stems and flowers.

This is Class-10 pathogenesis-related protein 1 (PR10-1) from Medicago truncatula (Barrel medic).